The following is a 302-amino-acid chain: Bifunctional phosphoglucose/phosphomannose isomerase (302 aa).

The SIS domain occupies 27-160 (VEGEVVRIEA…KVYGIDVKIP (134 aa)). Residues G47, S48, S87, S89, T92, and R135 each coordinate D-fructose 6-phosphate. 6 residues coordinate D-glucose 6-phosphate: G47, S48, S87, S89, T92, and R135. E203 serves as the catalytic Proton acceptor. Residues H219 and K298 each coordinate D-fructose 6-phosphate. D-glucose 6-phosphate-binding residues include H219 and K298. H219 acts as the Proton donor in catalysis. K298 serves as the catalytic Proton acceptor.

The protein belongs to the PGI/PMI family. In terms of assembly, homodimer.

The protein localises to the cytoplasm. It carries out the reaction alpha-D-glucose 6-phosphate = beta-D-fructose 6-phosphate. The enzyme catalyses D-mannose 6-phosphate = D-fructose 6-phosphate. Inhibited by 5-phosphoarabinonate (PAB) and 6-phosphogluconate. In terms of biological role, dual specificity isomerase that catalyzes the isomerization of both glucose-6-phosphate and mannose-6-phosphate to fructose-6-phosphate with similar catalytic efficiency. The chain is Bifunctional phosphoglucose/phosphomannose isomerase from Pyrobaculum aerophilum (strain ATCC 51768 / DSM 7523 / JCM 9630 / CIP 104966 / NBRC 100827 / IM2).